A 676-amino-acid polypeptide reads, in one-letter code: UvrABC system protein B (676 aa).

In terms of domain architecture, Helicase ATP-binding spans 26 to 414 (EGLENGLAHQ…SDGEIAEQVV (389 aa)). ATP is bound at residue 39–46 (GVTGSGKT). The Beta-hairpin motif lies at 92–115 (YFDYYQPEAYVPTTDTFIEKDSSV). A Helicase C-terminal domain is found at 432 to 598 (QVDDLLSEIR…ALKKDVADIL (167 aa)). The region spanning 636 to 671 (EKAIQKLESKMYQHAKDLEFEQAAQVRDEIDNLRKQ) is the UVR domain.

It belongs to the UvrB family. Forms a heterotetramer with UvrA during the search for lesions. Interacts with UvrC in an incision complex.

The protein localises to the cytoplasm. The UvrABC repair system catalyzes the recognition and processing of DNA lesions. A damage recognition complex composed of 2 UvrA and 2 UvrB subunits scans DNA for abnormalities. Upon binding of the UvrA(2)B(2) complex to a putative damaged site, the DNA wraps around one UvrB monomer. DNA wrap is dependent on ATP binding by UvrB and probably causes local melting of the DNA helix, facilitating insertion of UvrB beta-hairpin between the DNA strands. Then UvrB probes one DNA strand for the presence of a lesion. If a lesion is found the UvrA subunits dissociate and the UvrB-DNA preincision complex is formed. This complex is subsequently bound by UvrC and the second UvrB is released. If no lesion is found, the DNA wraps around the other UvrB subunit that will check the other stand for damage. This chain is UvrABC system protein B, found in Aliivibrio fischeri (strain ATCC 700601 / ES114) (Vibrio fischeri).